The sequence spans 346 residues: Cell shape-determining protein MreC (346 aa).

A coiled-coil region spans residues 89–118 (NRRLKAELAEMRQWRDRALALQDQNDRFKS). The segment at 292–346 (SLPPVTTEDPQTSILSNPVSRPVAPTPSPATATPSAAPAARPATTATPPQTGAPR) is disordered. Positions 299 to 308 (EDPQTSILSN) are enriched in polar residues. Residues 309 to 340 (PVSRPVAPTPSPATATPSAAPAARPATTATPP) show a composition bias toward low complexity.

It belongs to the MreC family. In terms of assembly, interacts with penicillin-binding proteins (PBP2, PBP1a, PBP1b, PBP2a and PBP2b). Interacts with outer membrane proteins belonging to the TonB-dependent receptor family of transport proteins.

The protein localises to the periplasm. Its function is as follows. Involved in formation and maintenance of cell shape. Required for the spatial organization of components of the peptidoglycan-synthesizing holoenzyme in the periplasm and peptidoglycan synthetic activity. The sequence is that of Cell shape-determining protein MreC from Caulobacter vibrioides (strain NA1000 / CB15N) (Caulobacter crescentus).